Here is a 93-residue protein sequence, read N- to C-terminus: Co-chaperonin GroES (93 aa).

The protein belongs to the GroES chaperonin family. Heptamer of 7 subunits arranged in a ring. Interacts with the chaperonin GroEL.

It is found in the cytoplasm. Its function is as follows. Together with the chaperonin GroEL, plays an essential role in assisting protein folding. The GroEL-GroES system forms a nano-cage that allows encapsulation of the non-native substrate proteins and provides a physical environment optimized to promote and accelerate protein folding. GroES binds to the apical surface of the GroEL ring, thereby capping the opening of the GroEL channel. The chain is Co-chaperonin GroES from Lacticaseibacillus paracasei (strain ATCC 334 / BCRC 17002 / CCUG 31169 / CIP 107868 / KCTC 3260 / NRRL B-441) (Lactobacillus paracasei).